A 776-amino-acid polypeptide reads, in one-letter code: Isoamylase (776 aa).

The signal sequence occupies residues 1–26 (MKCPKILAALLGCAVLAGVPAMPAHA). 5 residues coordinate Ca(2+): Asp-154, Glu-255, Thr-256, Asn-258, and Asp-285. The active-site Nucleophile is the Asp-401. A disulfide bond links Cys-410 and Cys-422. Glu-461 acts as the Proton donor in catalysis. Intrachain disulfides connect Cys-546–Cys-616 and Cys-738–Cys-766.

The protein belongs to the glycosyl hydrolase 13 family. As to quaternary structure, monomer. Ca(2+) serves as cofactor.

The protein resides in the secreted. The enzyme catalyses Hydrolysis of (1-&gt;6)-alpha-D-glucosidic branch linkages in glycogen, amylopectin and their beta-limit dextrins.. The sequence is that of Isoamylase (iam) from Pseudomonas amyloderamosa.